Here is a 138-residue protein sequence, read N- to C-terminus: Large ribosomal subunit protein uL16 (138 aa).

The segment covering 1–21 (MLIPRKVKHRKQHHPSLRGRA) has biased composition (basic residues). The disordered stretch occupies residues 1–22 (MLIPRKVKHRKQHHPSLRGRAK).

The protein belongs to the universal ribosomal protein uL16 family. In terms of assembly, part of the 50S ribosomal subunit.

In terms of biological role, binds 23S rRNA and is also seen to make contacts with the A and possibly P site tRNAs. The polypeptide is Large ribosomal subunit protein uL16 (Thermobifida fusca (strain YX)).